We begin with the raw amino-acid sequence, 379 residues long: Leukocyte elastase inhibitor (379 aa).

The residue at position 1 (Met1) is an N-acetylmethionine. N6-acetyllysine is present on residues Lys137 and Lys177. The tract at residues 351 to 379 is CARD-binding motif (CBM); that stretch reads NFNADHPFIFFIRHNPSANILFLGRFSSP.

Belongs to the serpin family. Ov-serpin subfamily. As to quaternary structure, monomer. Interacts (via C-terminus) with CASP1; CASP4 (via CARD domain) and CASP5; these interactions regulate the activity of inflammatory caspases. Interacts with PRTN3. Interacts with GZMH. Interacts with TMSB4. The N-terminus is blocked.

The protein resides in the secreted. It is found in the cytoplasm. Its subcellular location is the cytolytic granule. The protein localises to the early endosome. Neutrophil serine protease inhibitor that plays an essential role in the regulation of the innate immune response, inflammation and cellular homeostasis. Acts primarily to protect the cell from proteases released in the cytoplasm during stress or infection. These proteases are important in killing microbes but when released from granules, these potent enzymes also destroy host proteins and contribute to mortality. Regulates the activity of the neutrophil proteases elastase, cathepsin G, proteinase-3, chymase, chymotrypsin, and kallikrein-3. Also acts as a potent intracellular inhibitor of GZMH by directly blocking its proteolytic activity. During inflammation, limits the activity of inflammatory caspases CASP1, CASP4 and CASP5 by suppressing their caspase-recruitment domain (CARD) oligomerization and enzymatic activation. When secreted, promotes the proliferation of beta-cells via its protease inhibitory function. This is Leukocyte elastase inhibitor (SERPINB1) from Equus caballus (Horse).